The following is a 508-amino-acid chain: Photosystem II CP47 reaction center protein (508 aa).

A run of 6 helical transmembrane segments spans residues 21–36 (SVHI…WAGS), 101–115 (IVFS…IWHW), 140–156 (GIHL…FGAF), 203–218 (IAAG…FHLS), 237–252 (VLSS…AFVV), and 457–472 (SFAL…HGAR).

The protein belongs to the PsbB/PsbC family. PsbB subfamily. PSII is composed of 1 copy each of membrane proteins PsbA, PsbB, PsbC, PsbD, PsbE, PsbF, PsbH, PsbI, PsbJ, PsbK, PsbL, PsbM, PsbT, PsbX, PsbY, PsbZ, Psb30/Ycf12, at least 3 peripheral proteins of the oxygen-evolving complex and a large number of cofactors. It forms dimeric complexes. It depends on Binds multiple chlorophylls. PSII binds additional chlorophylls, carotenoids and specific lipids. as a cofactor.

Its subcellular location is the plastid. It localises to the chloroplast thylakoid membrane. One of the components of the core complex of photosystem II (PSII). It binds chlorophyll and helps catalyze the primary light-induced photochemical processes of PSII. PSII is a light-driven water:plastoquinone oxidoreductase, using light energy to abstract electrons from H(2)O, generating O(2) and a proton gradient subsequently used for ATP formation. The chain is Photosystem II CP47 reaction center protein from Dioscorea elephantipes (Elephant's foot yam).